The chain runs to 242 residues: Arginine transport ATP-binding protein ArtP (242 aa).

Residues 3-241 enclose the ABC transporter domain; sequence IQLNGINCFY…QTEAFKNYLS (239 aa). 35–42 provides a ligand contact to ATP; the sequence is GPSGAGKS.

This sequence belongs to the ABC transporter superfamily. The complex is composed of two ATP-binding proteins (ArtP), two transmembrane proteins (ArtM and ArtQ) and two solute-binding proteins (ArtJ and ArtI).

It is found in the cell inner membrane. It catalyses the reaction a polar amino acid(out) + ATP + H2O = a polar amino acid(in) + ADP + phosphate + H(+). It carries out the reaction L-arginine(out) + ATP + H2O = L-arginine(in) + ADP + phosphate + H(+). Functionally, part of the ABC transporter complex ArtPIQMJ involved in arginine transport. Probably responsible for energy coupling to the transport system. In Escherichia coli O157:H7, this protein is Arginine transport ATP-binding protein ArtP (artP).